A 132-amino-acid polypeptide reads, in one-letter code: Large ribosomal subunit protein bL17 (132 aa).

The protein belongs to the bacterial ribosomal protein bL17 family. As to quaternary structure, part of the 50S ribosomal subunit. Contacts protein L32.

The polypeptide is Large ribosomal subunit protein bL17 (Ehrlichia canis (strain Jake)).